The primary structure comprises 333 residues: Acetyl-coenzyme A carboxylase carboxyl transferase subunit alpha (333 aa).

Residues 48-308 (LLEQKVDALR…KEMLVEELRD (261 aa)) form the CoA carboxyltransferase C-terminal domain.

It belongs to the AccA family. Acetyl-CoA carboxylase is a heterohexamer composed of biotin carboxyl carrier protein (AccB), biotin carboxylase (AccC) and two subunits each of ACCase subunit alpha (AccA) and ACCase subunit beta (AccD).

The protein localises to the cytoplasm. It catalyses the reaction N(6)-carboxybiotinyl-L-lysyl-[protein] + acetyl-CoA = N(6)-biotinyl-L-lysyl-[protein] + malonyl-CoA. It participates in lipid metabolism; malonyl-CoA biosynthesis; malonyl-CoA from acetyl-CoA: step 1/1. Its function is as follows. Component of the acetyl coenzyme A carboxylase (ACC) complex. First, biotin carboxylase catalyzes the carboxylation of biotin on its carrier protein (BCCP) and then the CO(2) group is transferred by the carboxyltransferase to acetyl-CoA to form malonyl-CoA. This Chlorobium limicola (strain DSM 245 / NBRC 103803 / 6330) protein is Acetyl-coenzyme A carboxylase carboxyl transferase subunit alpha.